We begin with the raw amino-acid sequence, 365 residues long: tRNA-specific 2-thiouridylase MnmA (365 aa).

Residues 9–16 (GLSGGVDS) and Met35 contribute to the ATP site. Residues 95 to 97 (NPD) are interaction with target base in tRNA. The active-site Nucleophile is Cys100. The cysteines at positions 100 and 196 are disulfide-linked. An ATP-binding site is contributed by Gly124. Residues 146 to 148 (KDQ) are interaction with tRNA. Cys196 acts as the Cysteine persulfide intermediate in catalysis. Residues 315-316 (RY) form an interaction with tRNA region.

This sequence belongs to the MnmA/TRMU family.

The protein resides in the cytoplasm. It carries out the reaction S-sulfanyl-L-cysteinyl-[protein] + uridine(34) in tRNA + AH2 + ATP = 2-thiouridine(34) in tRNA + L-cysteinyl-[protein] + A + AMP + diphosphate + H(+). In terms of biological role, catalyzes the 2-thiolation of uridine at the wobble position (U34) of tRNA, leading to the formation of s(2)U34. In Dechloromonas aromatica (strain RCB), this protein is tRNA-specific 2-thiouridylase MnmA.